The following is a 347-amino-acid chain: DNA-directed RNA polymerase subunit alpha (347 aa).

The segment at methionine 1 to aspartate 243 is alpha N-terminal domain (alpha-NTD). Residues serine 255 to alanine 347 form an alpha C-terminal domain (alpha-CTD) region.

Belongs to the RNA polymerase alpha chain family. In terms of assembly, homodimer. The RNAP catalytic core consists of 2 alpha, 1 beta, 1 beta' and 1 omega subunit. When a sigma factor is associated with the core the holoenzyme is formed, which can initiate transcription.

The enzyme catalyses RNA(n) + a ribonucleoside 5'-triphosphate = RNA(n+1) + diphosphate. Its function is as follows. DNA-dependent RNA polymerase catalyzes the transcription of DNA into RNA using the four ribonucleoside triphosphates as substrates. This Lawsonia intracellularis (strain PHE/MN1-00) protein is DNA-directed RNA polymerase subunit alpha.